A 609-amino-acid polypeptide reads, in one-letter code: MNILNPGKFKCIVFDQLRHTWTFLLFICDFLAKIYRTPRITAHQEQLANHNNNNNNNNDLIMEQDMPEEEVGQPEEALPQQDNGEVVDRFNAIQAAVELMDAASDLDEEEEEEDDDVDVDVDYGDTDSESEFEEMYSDEWTSSSDELDEGTELSKSVLNVFLSSDKQQSQMAGQIPMYAFQPLRLVKCQYRDKHIPGGFPLARSGHRIIASNSHLYSLGGYNPRSAMSASRHGRCLLFQELWSYNFATRTWRLELNAGNAANMPVELASNALTIHNNVLISHGGTGYPFGVSCSNDCYVYRTASAGATPGVDRLQVKGDLPTAQYGPGIVIHKHFLYTIGGTTGFDYTCDVYRLDLRTGIWENVYISRPEMRDDPEGRYRHEVVYDGKHIFVLGGGTSHSVYDLQRIPAYNLEANCWDYFETYPDQRAADADDGNRGYPKPRKCFSCVQHQSSTGDIEAFITGGLQGDFSTYFSDIWKLNLRTKHWYRIETAILPRPLYFHSAAHSDNGCMYVFGGIEYIDKEMRRRNDLYKMWMTVPKLSEMCWDAITYYNDNLDLYDRKTLLEAGIPKRFTERLPPQRRRRLDTSQPDPSMLISLYSNPKRARSSTQ.

The tract at residues 103-146 (ASDLDEEEEEEDDDVDVDVDYGDTDSESEFEEMYSDEWTSSSDE) is disordered. Residues 104–137 (SDLDEEEEEEDDDVDVDVDYGDTDSESEFEEMYS) show a composition bias toward acidic residues. Kelch repeat units follow at residues 214-277 (HLYS…IHNN), 279-334 (LISH…IHKH), 335-381 (FLYT…RYRH), 389-437 (HIFV…GNRG), 458-508 (EAFI…HSDN), and 510-554 (CMYV…YNDN). A disordered region spans residues 576–609 (LPPQRRRRLDTSQPDPSMLISLYSNPKRARSSTQ).

Interacts with Elongin-C; may be the substrate recognition component of an E3 ubiquitin ligase complex.

In terms of biological role, activates the Pk92B/DASK1-MAPK signaling cascade. The sequence is that of Kelch domain-containing protein 10 homolog (slim) from Drosophila melanogaster (Fruit fly).